A 283-amino-acid chain; its full sequence is Putative transcription factor kapC (283 aa).

A compositionally biased stretch (pro residues) spans 1–10 (MQPTLAPAPH). The tract at residues 1-121 (MQPTLAPAPH…NRAAQRAFRQ (121 aa)) is disordered. Low complexity predominate over residues 26 to 42 (HDQLLAAHQHLSHPQQA). Positions 55–67 (QPNTTSPRDQNNI) are enriched in polar residues. Residues 102–165 (PLSTSKRAAQ…EYIINLQSRL (64 aa)) form the bZIP domain. The interval 103-126 (LSTSKRAAQNRAAQRAFRQRKESY) is basic motif. Positions 108–118 (RAAQNRAAQRA) are enriched in low complexity. Residues 130 to 161 (LEEQVKEFDNTNETMKQLQAENYQLREYIINL) are leucine-zipper. The disordered stretch occupies residues 178-283 (NIDLNQPRND…EPGHGLPVVS (106 aa)).

This sequence belongs to the bZIP family.

Its subcellular location is the nucleus. Its function is as follows. Putative transcription factor. In Aspergillus niger (strain ATCC MYA-4892 / CBS 513.88 / FGSC A1513), this protein is Putative transcription factor kapC (kapC).